Consider the following 176-residue polypeptide: Orotate phosphoribosyltransferase (176 aa).

5-phospho-alpha-D-ribose 1-diphosphate contacts are provided by residues arginine 90, lysine 91, lysine 94, and 116-124; that span reads EDVTTTGGS. 2 residues coordinate orotate: threonine 120 and arginine 148.

The protein belongs to the purine/pyrimidine phosphoribosyltransferase family. PyrE subfamily. Homodimer. The cofactor is Mg(2+).

It catalyses the reaction orotidine 5'-phosphate + diphosphate = orotate + 5-phospho-alpha-D-ribose 1-diphosphate. It functions in the pathway pyrimidine metabolism; UMP biosynthesis via de novo pathway; UMP from orotate: step 1/2. Functionally, catalyzes the transfer of a ribosyl phosphate group from 5-phosphoribose 1-diphosphate to orotate, leading to the formation of orotidine monophosphate (OMP). This chain is Orotate phosphoribosyltransferase, found in Methanocaldococcus jannaschii (strain ATCC 43067 / DSM 2661 / JAL-1 / JCM 10045 / NBRC 100440) (Methanococcus jannaschii).